We begin with the raw amino-acid sequence, 316 residues long: PAK4-inhibitor inka2 (316 aa).

2 disordered regions span residues 43–74 (RSSPPPSPDIEKPCVVPPRRAPRRDNRISHRT) and 108–130 (YSEVSGGSLRGEEDDIVEEESET). A compositionally biased stretch (basic and acidic residues) spans 65-74 (RRDNRISHRT). Over residues 119–129 (EEDDIVEEESE) the composition is skewed to acidic residues. An inka box region spans residues 182-219 (DSQDWTGCLLSQSRSRQPLVLGDNSFADLVKQWMDLPE).

Belongs to the INKA family.

It localises to the nucleus. Functionally, inhibitor of the serine/threonine-protein kinase pak4/pak5. Acts by binding pak4/pak5 in a substrate-like manner, inhibiting the protein kinase activity. In Xenopus laevis (African clawed frog), this protein is PAK4-inhibitor inka2.